The sequence spans 232 residues: MKRAVVVFSGGQDSTTCLIQALQQYDEVHCITFDYGQRHRAEIDVARELAIQLGAKAHKVLDVGMLNELAVSSLTRDNIPVPSYSEEGEDSIPSTFVPGRNILFLTLAAIYAYQVQAQAVITGVCETDFSGYPDCRDEFVKALNHAIDLGIGRDIAFITPLMWLDKAETWALADYYQQLDRIRHDTLTCYNGIQGDGCGQCAACHLRAKGLEFYLANKPKVILSLKQKTGLV.

An ATP-binding site is contributed by 8–18 (FSGGQDSTTCL). 4 residues coordinate Zn(2+): cysteine 189, cysteine 198, cysteine 201, and cysteine 204.

This sequence belongs to the QueC family. Zn(2+) serves as cofactor.

It catalyses the reaction 7-carboxy-7-deazaguanine + NH4(+) + ATP = 7-cyano-7-deazaguanine + ADP + phosphate + H2O + H(+). It participates in purine metabolism; 7-cyano-7-deazaguanine biosynthesis. Catalyzes the ATP-dependent conversion of 7-carboxy-7-deazaguanine (CDG) to 7-cyano-7-deazaguanine (preQ(0)). In Yersinia enterocolitica serotype O:8 / biotype 1B (strain NCTC 13174 / 8081), this protein is 7-cyano-7-deazaguanine synthase.